A 932-amino-acid chain; its full sequence is Eukaryotic translation initiation factor 3 subunit A (932 aa).

A PCI domain is found at 309–492 (KPATANFVIL…NSISFSSDLF (184 aa)). Phosphoserine occurs at positions 374 and 501. Positions 537–862 (LRKQQAEAAY…DEEISRKLAE (326 aa)) form a coiled coil. Basic and acidic residues predominate over residues 793–865 (AEEEAARAAE…ISRKLAEKAA (73 aa)). The segment at 793–932 (AEEEAARAAE…PPSRRNQQQQ (140 aa)) is disordered. Ser-874, Ser-875, and Ser-877 each carry phosphoserine. Residues 877-893 (SPGAWRRGGASAGGVSR) are compositionally biased toward low complexity.

It belongs to the eIF-3 subunit A family. Component of the eukaryotic translation initiation factor 3 (eIF-3) complex. The eIF-3 complex appears to include tif32/eif3a, SPAC25G10.08/eif3b, tif33/eif3c, SPBC4C3.07/eif3f, tif35/eif3g and sum1/eif3i. This set of common subunits may also associate exclusively with either moe1/eif3d and int6/eif3e, or with SPAC821.05/eif3h and SPAC1751.03/eif3m. The eIF-3 complex may also include SPAC3A12.13c/eif3j.

The protein localises to the cytoplasm. In terms of biological role, RNA-binding component of the eukaryotic translation initiation factor 3 (eIF-3) complex, which is involved in protein synthesis of a specialized repertoire of mRNAs and, together with other initiation factors, stimulates binding of mRNA and methionyl-tRNAi to the 40S ribosome. The eIF-3 complex specifically targets and initiates translation of a subset of mRNAs involved in cell proliferation. This Schizosaccharomyces pombe (strain 972 / ATCC 24843) (Fission yeast) protein is Eukaryotic translation initiation factor 3 subunit A (tif32).